The chain runs to 1056 residues: Ribosomal protein S6 kinase delta-1 (1056 aa).

Positions 8–132 (SADLARFYTV…DFFKGGVISD (125 aa)) constitute a PX domain. Residues 204 to 223 (VGAVASDSEPSRVEDRESRS) are disordered. A compositionally biased stretch (basic and acidic residues) spans 212-222 (EPSRVEDRESR). The 29-residue stretch at 276–304 (VQGESSPTRREAVKRRTAEYLMRAESICS) folds into the MIT domain. A phosphoserine mark is found at serine 281, serine 422, serine 423, serine 426, serine 446, serine 448, and serine 454. Positions 343–444 (GVIDKVLLVM…SMPPRVCLQQ (102 aa)) constitute a Protein kinase 1 domain. Residues 426 to 504 (SLDIKEGRPS…KWLDSGSSSE (79 aa)) form a disordered region. The span at 443–454 (QQPSASPQGGSS) shows a compositional bias: low complexity. Over residues 473-482 (TSLTPSSQDD) the composition is skewed to polar residues. A phosphoserine mark is found at serine 493 and serine 527. Positions 529–588 (SEESVMQPEGDKADTQAVSSPASLATGSVSPSTHLRVFSGGEDLEAVSSPPTSESLSRSK) are disordered. The segment covering 544 to 561 (QAVSSPASLATGSVSPST) has biased composition (polar residues). A compositionally biased stretch (low complexity) spans 576 to 587 (SSPPTSESLSRS). Phosphoserine is present on residues serine 577, serine 599, serine 602, serine 634, serine 655, serine 658, serine 661, and serine 787. The disordered stretch occupies residues 628–662 (TLEDGDSPSQSLDPGESKRESEAQDSVSRGSDDSV). A Protein kinase 2 domain is found at 789–1046 (RSESDRLGQV…VEDIKSHPFF (258 aa)). Residues 795–803 (LGQVEVVVT) and lysine 823 each bind ATP. Aspartate 919 acts as the Proton acceptor in catalysis.

Belongs to the protein kinase superfamily. Ser/Thr protein kinase family. S6 kinase subfamily. As to quaternary structure, interacts with SPHK1 and phosphatidylinositol 3-phosphate. Interacts (via PX domain) with PRDX3.

The protein resides in the cytoplasm. Its subcellular location is the membrane. The protein localises to the early endosome. It catalyses the reaction L-seryl-[protein] + ATP = O-phospho-L-seryl-[protein] + ADP + H(+). The enzyme catalyses L-threonyl-[protein] + ATP = O-phospho-L-threonyl-[protein] + ADP + H(+). Functionally, may be involved in transmitting sphingosine-1 phosphate (SPP)-mediated signaling into the cell. Plays a role in the recruitment of PRDX3 to early endosomes. In Mus musculus (Mouse), this protein is Ribosomal protein S6 kinase delta-1 (Rps6kc1).